The sequence spans 416 residues: Serine hydroxymethyltransferase (416 aa).

Residues leucine 117 and 121–123 each bind (6S)-5,6,7,8-tetrahydrofolate; that span reads GHL. Position 226 is an N6-(pyridoxal phosphate)lysine (lysine 226).

This sequence belongs to the SHMT family. As to quaternary structure, homodimer. It depends on pyridoxal 5'-phosphate as a cofactor.

It localises to the cytoplasm. The enzyme catalyses (6R)-5,10-methylene-5,6,7,8-tetrahydrofolate + glycine + H2O = (6S)-5,6,7,8-tetrahydrofolate + L-serine. It functions in the pathway one-carbon metabolism; tetrahydrofolate interconversion. It participates in amino-acid biosynthesis; glycine biosynthesis; glycine from L-serine: step 1/1. In terms of biological role, catalyzes the reversible interconversion of serine and glycine with tetrahydrofolate (THF) serving as the one-carbon carrier. This reaction serves as the major source of one-carbon groups required for the biosynthesis of purines, thymidylate, methionine, and other important biomolecules. Also exhibits THF-independent aldolase activity toward beta-hydroxyamino acids, producing glycine and aldehydes, via a retro-aldol mechanism. This is Serine hydroxymethyltransferase from Leptospira biflexa serovar Patoc (strain Patoc 1 / Ames).